We begin with the raw amino-acid sequence, 216 residues long: Protein-L-isoaspartate O-methyltransferase (216 aa).

The active site involves S61.

This sequence belongs to the methyltransferase superfamily. L-isoaspartyl/D-aspartyl protein methyltransferase family.

The protein localises to the cytoplasm. The catalysed reaction is [protein]-L-isoaspartate + S-adenosyl-L-methionine = [protein]-L-isoaspartate alpha-methyl ester + S-adenosyl-L-homocysteine. Functionally, catalyzes the methyl esterification of L-isoaspartyl residues in peptides and proteins that result from spontaneous decomposition of normal L-aspartyl and L-asparaginyl residues. It plays a role in the repair and/or degradation of damaged proteins. In Dinoroseobacter shibae (strain DSM 16493 / NCIMB 14021 / DFL 12), this protein is Protein-L-isoaspartate O-methyltransferase.